A 265-amino-acid chain; its full sequence is MADS-box protein JOINTLESS (265 aa).

An MADS-box domain is found at 3–57 (REKIQIKKIDNSTARQVTFSKRRRGLFKKAEELSVLCDADVALIIFSSTGKLFDY). The K-box domain maps to 87–177 (QLVENSNYSR…RQQVMEISNN (91 aa)). The disordered stretch occupies residues 196–232 (ENGFNNNNNEDGQSSESVTNPCNSIDPPPQDDDSSDT). The span at 205-218 (EDGQSSESVTNPCN) shows a compositional bias: polar residues.

In terms of tissue distribution, widely expressed with highest levels in shoot tips and axillary buds. Also found in fully developed pedicels and flowers.

It is found in the nucleus. In terms of biological role, putative transcription factor that coordinates gene expression underlying the differentiation of the pedicel abscission zone. May also be involved in the maintenance of the inflorescence meristem state. This is MADS-box protein JOINTLESS (J) from Solanum lycopersicum (Tomato).